A 240-amino-acid polypeptide reads, in one-letter code: Large ribosomal subunit protein uL2 (240 aa).

Polar residues predominate over residues 1-11; sequence MGKRLISQNRG. 2 disordered regions span residues 1–31 and 206–240; these read MGKR…VKYR and GGGR…TGRK. Composition is skewed to basic residues over residues 13-28 and 224-240; these read GTPK…KGAV and SPGR…TGRK.

Belongs to the universal ribosomal protein uL2 family. As to quaternary structure, part of the 50S ribosomal subunit. Forms a bridge to the 30S subunit in the 70S ribosome.

One of the primary rRNA binding proteins. Required for association of the 30S and 50S subunits to form the 70S ribosome, for tRNA binding and peptide bond formation. It has been suggested to have peptidyltransferase activity; this is somewhat controversial. Makes several contacts with the 16S rRNA in the 70S ribosome. In Methanococcus maripaludis (strain C6 / ATCC BAA-1332), this protein is Large ribosomal subunit protein uL2.